The sequence spans 143 residues: Polyadenylate-binding protein-interacting protein 2 (143 aa).

Residues 11–21 (TLNPNAPVFDP) carry the PAM2-like motif.

The protein is Polyadenylate-binding protein-interacting protein 2 (CID2) of Arabidopsis thaliana (Mouse-ear cress).